The sequence spans 66 residues: Large ribosomal subunit protein bL35 (66 aa).

Over residues 1 to 16 (MPKQKTHRASAKRFKR) the composition is skewed to basic residues. Residues 1–20 (MPKQKTHRASAKRFKRTGNG) are disordered.

Belongs to the bacterial ribosomal protein bL35 family.

The sequence is that of Large ribosomal subunit protein bL35 from Lactococcus lactis subsp. lactis (strain IL1403) (Streptococcus lactis).